The following is a 519-amino-acid chain: Importin subunit alpha-9 (519 aa).

The disordered stretch occupies residues 1–29 (MADDGSASNRRDPIKSSVGNVAGQRRRKQ). ARM repeat units follow at residues 116–156 (FPPV…NIAA), 158–197 (KPEE…NVAG), 200–239 (EDLR…NLIK), 244–283 (KAAA…YLSA), 286–326 (DIAT…NFVA), 335–374 (ILIR…NIAA), 377–416 (IEHK…NLCV), and 429–468 (QEHL…LVLR).

The protein belongs to the importin alpha family. As to quaternary structure, forms a complex with importin subunit beta-1.

It is found in the nucleus envelope. Functionally, binds to conventional NLS motifs and mediates nuclear protein import across the nuclear envelope. Acts as a cellular receptor for the nuclear import of the virD2 protein of Agrobacterium, but is not essential for Agrobacterium-mediated root transformation. The chain is Importin subunit alpha-9 from Arabidopsis thaliana (Mouse-ear cress).